Here is a 357-residue protein sequence, read N- to C-terminus: NADH-quinone oxidoreductase subunit H (357 aa).

8 helical membrane-spanning segments follow: residues 20 to 40, 92 to 112, 127 to 147, 165 to 185, 203 to 223, 259 to 279, 294 to 314, and 329 to 349; these read WLLV…MGCV, ALFV…WAVI, LLFV…AGWA, ISYE…SGSL, GLTF…IYII, FFLA…LMFL, IPGW…FIWF, and LGWK…AIWM.

The protein belongs to the complex I subunit 1 family. As to quaternary structure, NDH-1 is composed of 14 different subunits. Subunits NuoA, H, J, K, L, M, N constitute the membrane sector of the complex.

It localises to the cell inner membrane. The enzyme catalyses a quinone + NADH + 5 H(+)(in) = a quinol + NAD(+) + 4 H(+)(out). In terms of biological role, NDH-1 shuttles electrons from NADH, via FMN and iron-sulfur (Fe-S) centers, to quinones in the respiratory chain. The immediate electron acceptor for the enzyme in this species is believed to be ubiquinone. Couples the redox reaction to proton translocation (for every two electrons transferred, four hydrogen ions are translocated across the cytoplasmic membrane), and thus conserves the redox energy in a proton gradient. This subunit may bind ubiquinone. This is NADH-quinone oxidoreductase subunit H from Herminiimonas arsenicoxydans.